The primary structure comprises 162 residues: Glutathione peroxidase-like peroxiredoxin 2 (162 aa).

Catalysis depends on Cys-37, which acts as the Cysteine sulfenic acid (-SOH) intermediate. Cys-37 and Cys-83 form a disulfide bridge.

It belongs to the glutathione peroxidase family. In terms of assembly, monomer.

The protein resides in the cytoplasm. The protein localises to the nucleus. It localises to the mitochondrion outer membrane. It is found in the mitochondrion inner membrane. The catalysed reaction is a hydroperoxide + [thioredoxin]-dithiol = an alcohol + [thioredoxin]-disulfide + H2O. Its function is as follows. Glutathione peroxidase-like protein that protects cells from phospholipid hydroperoxides and nonphospholipid peroxides during oxidative stress. Plays an important role in the oxidative stress-induced response in the presence of Ca(2+). Has peroxidase activity using preferentially thioredoxin as a reducing power. The redox state of the mitochondrial GPX2 is regulated by TRX1 and TRX2 (cytoplasmic thioredoxin), and by TRX3 (mitochondrial matrix thioredoxin). Involved in sporulation. This chain is Glutathione peroxidase-like peroxiredoxin 2, found in Saccharomyces cerevisiae (strain ATCC 204508 / S288c) (Baker's yeast).